Reading from the N-terminus, the 254-residue chain is Alcohol dehydrogenase (254 aa).

Residue 10–33 (FVAGLGGIGLDTSREIVKSGPKNL) coordinates NAD(+). A substrate-binding site is contributed by serine 138. Tyrosine 151 serves as the catalytic Proton acceptor.

It belongs to the short-chain dehydrogenases/reductases (SDR) family. In terms of assembly, homodimer.

The enzyme catalyses a primary alcohol + NAD(+) = an aldehyde + NADH + H(+). The catalysed reaction is a secondary alcohol + NAD(+) = a ketone + NADH + H(+). The chain is Alcohol dehydrogenase (Adh) from Drosophila heteroneura (Fruit fly).